A 269-amino-acid chain; its full sequence is Ribosomal RNA small subunit methyltransferase A (269 aa).

S-adenosyl-L-methionine contacts are provided by N11, L13, G37, E57, D85, and N104.

Belongs to the class I-like SAM-binding methyltransferase superfamily. rRNA adenine N(6)-methyltransferase family. RsmA subfamily.

It is found in the cytoplasm. It carries out the reaction adenosine(1518)/adenosine(1519) in 16S rRNA + 4 S-adenosyl-L-methionine = N(6)-dimethyladenosine(1518)/N(6)-dimethyladenosine(1519) in 16S rRNA + 4 S-adenosyl-L-homocysteine + 4 H(+). In terms of biological role, specifically dimethylates two adjacent adenosines (A1518 and A1519) in the loop of a conserved hairpin near the 3'-end of 16S rRNA in the 30S particle. May play a critical role in biogenesis of 30S subunits. This chain is Ribosomal RNA small subunit methyltransferase A, found in Campylobacter hominis (strain ATCC BAA-381 / DSM 21671 / CCUG 45161 / LMG 19568 / NCTC 13146 / CH001A).